The chain runs to 169 residues: Ecotin (169 aa).

The first 21 residues, 1-21 (MKKCSIILASVLLATSINAIA), serve as a signal peptide directing secretion. A disulfide bond links C76 and C113.

The protein belongs to the protease inhibitor I11 (ecotin) family. In terms of assembly, homodimer.

Its subcellular location is the periplasm. Its function is as follows. General inhibitor of pancreatic serine proteases: inhibits chymotrypsin, trypsin, elastases, factor X, kallikrein as well as a variety of other proteases. The polypeptide is Ecotin (Yersinia pseudotuberculosis serotype O:1b (strain IP 31758)).